The sequence spans 239 residues: Methylthioribulose-1-phosphate dehydratase (239 aa).

A substrate-binding site is contributed by C94. Zn(2+) is bound by residues H112 and H114. The active-site Proton donor/acceptor is E136. H192 is a Zn(2+) binding site.

The protein belongs to the aldolase class II family. MtnB subfamily. Requires Zn(2+) as cofactor.

Its subcellular location is the cytoplasm. It carries out the reaction 5-(methylsulfanyl)-D-ribulose 1-phosphate = 5-methylsulfanyl-2,3-dioxopentyl phosphate + H2O. It functions in the pathway amino-acid biosynthesis; L-methionine biosynthesis via salvage pathway; L-methionine from S-methyl-5-thio-alpha-D-ribose 1-phosphate: step 2/6. In terms of biological role, catalyzes the dehydration of methylthioribulose-1-phosphate (MTRu-1-P) into 2,3-diketo-5-methylthiopentyl-1-phosphate (DK-MTP-1-P). Functions in the methionine salvage pathway. May play a role in apoptosis. This chain is Methylthioribulose-1-phosphate dehydratase, found in Xenopus laevis (African clawed frog).